Consider the following 505-residue polypeptide: Probable cytosol aminopeptidase (505 aa).

The Mn(2+) site is built by Lys-269 and Asp-274. The active site involves Lys-281. Mn(2+)-binding residues include Asp-292, Asp-351, and Glu-353. Arg-355 is an active-site residue.

It belongs to the peptidase M17 family. Requires Mn(2+) as cofactor.

The protein resides in the cytoplasm. The enzyme catalyses Release of an N-terminal amino acid, Xaa-|-Yaa-, in which Xaa is preferably Leu, but may be other amino acids including Pro although not Arg or Lys, and Yaa may be Pro. Amino acid amides and methyl esters are also readily hydrolyzed, but rates on arylamides are exceedingly low.. It carries out the reaction Release of an N-terminal amino acid, preferentially leucine, but not glutamic or aspartic acids.. Its function is as follows. Presumably involved in the processing and regular turnover of intracellular proteins. Catalyzes the removal of unsubstituted N-terminal amino acids from various peptides. This chain is Probable cytosol aminopeptidase, found in Rhodococcus jostii (strain RHA1).